The chain runs to 429 residues: Chaperone SurA (429 aa).

The N-terminal stretch at 1 to 18 (MFKRIALVCALFSGVCFA) is a signal peptide. PpiC domains are found at residues 170-271 (NLTY…KLVA) and 281-380 (ITQT…EVIA).

Its subcellular location is the periplasm. It catalyses the reaction [protein]-peptidylproline (omega=180) = [protein]-peptidylproline (omega=0). In terms of biological role, chaperone involved in the correct folding and assembly of outer membrane proteins. Recognizes specific patterns of aromatic residues and the orientation of their side chains, which are found more frequently in integral outer membrane proteins. May act in both early periplasmic and late outer membrane-associated steps of protein maturation. The protein is Chaperone SurA of Legionella pneumophila subsp. pneumophila (strain Philadelphia 1 / ATCC 33152 / DSM 7513).